A 175-amino-acid chain; its full sequence is Nucleoside triphosphate/diphosphate phosphatase (175 aa).

Arg23 serves as the catalytic Proton donor. Residues Asn87, Asp103, Asp105, Asp107, Asp120, and Glu123 each coordinate Mg(2+).

It belongs to the Ntdp family. Requires Mg(2+) as cofactor.

It catalyses the reaction a ribonucleoside 5'-triphosphate + H2O = a ribonucleoside 5'-diphosphate + phosphate + H(+). The catalysed reaction is a ribonucleoside 5'-diphosphate + H2O = a ribonucleoside 5'-phosphate + phosphate + H(+). Functionally, has nucleoside phosphatase activity towards nucleoside triphosphates and nucleoside diphosphates. This chain is Nucleoside triphosphate/diphosphate phosphatase, found in Halalkalibacterium halodurans (strain ATCC BAA-125 / DSM 18197 / FERM 7344 / JCM 9153 / C-125) (Bacillus halodurans).